The primary structure comprises 180 residues: Prothoracicotropic hormone (180 aa).

Residues 1 to 15 form the signal peptide; sequence MKLLILCVMVHGLLA. The propeptide occupies 16–64; that stretch reads EGPGQVLWKEQVVAPEFLLDDREDIASNRNAFFYEDKRSFRPEGLGEQV. Intrachain disulfides connect cysteine 88–cysteine 123 and cysteine 111–cysteine 175.

As to quaternary structure, homodimer; disulfide-linked.

Its subcellular location is the secreted. Its function is as follows. PTTH is a brain secretory polypeptide of insects which stimulates the prothoracic glands to produce and release ecdysone, the steroid essential to insect development. The sequence is that of Prothoracicotropic hormone from Camponotus floridanus (Florida carpenter ant).